Here is a 295-residue protein sequence, read N- to C-terminus: Large ribosomal subunit protein uL15m (295 aa).

Residues 1–20 (MAGTARGCGTSLDLLRSLPR) constitute a mitochondrion transit peptide. The tract at residues 21–67 (VSLANLKPSPNSRKRERRPRDRRRGRKCGRGHKGERQRGTRPRLGFE) is disordered. A compositionally biased stretch (basic residues) spans 32–51 (SRKRERRPRDRRRGRKCGRG).

Belongs to the universal ribosomal protein uL15 family. In terms of assembly, component of the mitochondrial ribosome large subunit (39S) which comprises a 16S rRNA and about 50 distinct proteins.

The protein resides in the mitochondrion. The protein is Large ribosomal subunit protein uL15m (Mrpl15) of Mus musculus (Mouse).